A 148-amino-acid polypeptide reads, in one-letter code: UPF0540 protein At1g62000 (148 aa).

Positions 1-21 (MNATKFVVLLVIGILCAIVTA) are cleaved as a signal peptide. Over residues 123 to 132 (RANGKVASAS) the composition is skewed to low complexity. The segment at 123–148 (RANGKVASASRVKGSSEKKKGKGKKD) is disordered.

It belongs to the UPF0540 family.

The protein is UPF0540 protein At1g62000 of Arabidopsis thaliana (Mouse-ear cress).